Consider the following 805-residue polypeptide: Pentatricopeptide repeat-containing protein At4g01570 (805 aa).

PPR repeat units follow at residues 91 to 125, 126 to 160, 161 to 196, 211 to 241, 247 to 277, 288 to 322, 323 to 357, 358 to 392, 393 to 427, 428 to 462, 463 to 497, 593 to 627, 629 to 663, 664 to 698, 699 to 733, and 734 to 768; these read SATA…GVNL, DQTM…GDCL, NPSV…DNHS, GTVA…LKGM, DTWS…MKER, DICT…GHEP, DNST…GFVP, DTIV…GVRA, SCWT…GQFV, DAIT…GFSV, DLVT…NLVP, DVDM…GVTD, TSYT…FCAA, DIAT…GGYL, DIVM…GINP, and DVVS…GCLP.

This sequence belongs to the PPR family. P subfamily.

The sequence is that of Pentatricopeptide repeat-containing protein At4g01570 from Arabidopsis thaliana (Mouse-ear cress).